Reading from the N-terminus, the 450-residue chain is 3-keto-steroid reductase erg27 (450 aa).

3 residues coordinate NADP(+): Leu-25, Thr-53, and Lys-59. Catalysis depends on proton donor residues Ser-215 and Tyr-238. The NADP(+) site is built by Tyr-238, Lys-242, and Thr-296. Lys-242 acts as the Lowers pKa of active site Tyr in catalysis.

This sequence belongs to the short-chain dehydrogenases/reductases (SDR) family. ERG27 subfamily. As to quaternary structure, heterotetramer of erg25, erg26, erg27 and erg28. Erg28 acts as a scaffold to tether erg27 and other 4,4-demethylation-related enzymes, forming a demethylation enzyme complex, in the endoplasmic reticulum.

It is found in the endoplasmic reticulum membrane. The protein localises to the lipid droplet. It functions in the pathway steroid metabolism; ergosterol biosynthesis. Sterol-C4-methyl oxidase; part of the third module of ergosterol biosynthesis pathway that includes the late steps of the pathway. Erg27 is a catalytic component of the C-4 demethylation complex that catalyzes the conversion of 4,4-dimethylfecosterol into fecosterol via 4-methylfecosterol. The third module or late pathway involves the ergosterol synthesis itself through consecutive reactions that mainly occur in the endoplasmic reticulum (ER) membrane. Firstly, the squalene synthase erg9 catalyzes the condensation of 2 farnesyl pyrophosphate moieties to form squalene, which is the precursor of all steroids. Squalene synthase is crucial for balancing the incorporation of farnesyl diphosphate (FPP) into sterol and nonsterol isoprene synthesis. Secondly, squalene is converted into lanosterol by the consecutive action of the squalene epoxidase erg1 and the lanosterol synthase erg7. Then, the delta(24)-sterol C-methyltransferase erg6 methylates lanosterol at C-24 to produce eburicol. Eburicol is the substrate of the sterol 14-alpha demethylase encoded by cyp51A and cyp51B, to yield 4,4,24-trimethyl ergosta-8,14,24(28)-trienol. The C-14 reductase erg24 then reduces the C14=C15 double bond which leads to 4,4-dimethylfecosterol. A sequence of further demethylations at C-4, involving the C-4 demethylation complex containing the C-4 methylsterol oxidases erg25A or erg25B, the sterol-4-alpha-carboxylate 3-dehydrogenase erg26 and the 3-keto-steroid reductase erg27, leads to the production of fecosterol via 4-methylfecosterol. The C-8 sterol isomerase erg2 then catalyzes the reaction which results in unsaturation at C-7 in the B ring of sterols and thus converts fecosterol to episterol. The sterol-C5-desaturase erg3B then catalyzes the introduction of a C-5 double bond in the B ring to produce 5-dehydroepisterol. The 2 other sterol-C5-desaturases, erg3A and erg3C, seem to be less important in ergosterol biosynthesis. The C-22 sterol desaturase erg5 further converts 5-dehydroepisterol into ergosta-5,7,22,24(28)-tetraen-3beta-ol by forming the C-22(23) double bond in the sterol side chain. Finally, ergosta-5,7,22,24(28)-tetraen-3beta-ol is substrate of the C-24(28) sterol reductases erg4A and erg4B to produce ergosterol. Possible alternative sterol biosynthetic pathways might exist from fecosterol to ergosterol, depending on the activities of the erg3 isoforms. The chain is 3-keto-steroid reductase erg27 from Aspergillus fumigatus (strain ATCC MYA-4609 / CBS 101355 / FGSC A1100 / Af293) (Neosartorya fumigata).